The primary structure comprises 346 residues: tRNA(Ile)-lysidine synthase (346 aa).

32-37 (SGGPDS) serves as a coordination point for ATP.

Belongs to the tRNA(Ile)-lysidine synthase family.

It localises to the cytoplasm. It catalyses the reaction cytidine(34) in tRNA(Ile2) + L-lysine + ATP = lysidine(34) in tRNA(Ile2) + AMP + diphosphate + H(+). Ligates lysine onto the cytidine present at position 34 of the AUA codon-specific tRNA(Ile) that contains the anticodon CAU, in an ATP-dependent manner. Cytidine is converted to lysidine, thus changing the amino acid specificity of the tRNA from methionine to isoleucine. This chain is tRNA(Ile)-lysidine synthase, found in Rhodopseudomonas palustris (strain ATCC BAA-98 / CGA009).